A 551-amino-acid polypeptide reads, in one-letter code: Chaperonin GroEL (551 aa).

ATP contacts are provided by residues 29 to 32 (TMGP), Lys-50, 86 to 90 (DGTTT), Gly-414, 478 to 480 (NAA), and Asp-494.

Belongs to the chaperonin (HSP60) family. As to quaternary structure, forms a cylinder of 14 subunits composed of two heptameric rings stacked back-to-back. Interacts with the co-chaperonin GroES.

It localises to the cytoplasm. The enzyme catalyses ATP + H2O + a folded polypeptide = ADP + phosphate + an unfolded polypeptide.. Functionally, together with its co-chaperonin GroES, plays an essential role in assisting protein folding. The GroEL-GroES system forms a nano-cage that allows encapsulation of the non-native substrate proteins and provides a physical environment optimized to promote and accelerate protein folding. The protein is Chaperonin GroEL of Legionella jeonii.